A 360-amino-acid chain; its full sequence is Cuticle collagen dpy-2 (360 aa).

3 triple-helical region regions span residues 123–152 (GERG…PGTT), 174–230 (GPRG…KGRT), and 238–303 (GPPG…PGTC). 2 disordered regions span residues 127-158 (PSGD…ASCI) and 174-360 (GPRG…IRKW). The span at 189 to 198 (GEYGIGGRPG) shows a compositional bias: gly residues. Residues 242-258 (DSGLPGPWGPPGSAGMP) show a composition bias toward low complexity. The span at 273–288 (PGPPGAPGPGGMPGPN) shows a compositional bias: pro residues.

The protein belongs to the cuticular collagen family. In terms of assembly, collagen polypeptide chains are complexed within the cuticle by disulfide bonds and other types of covalent cross-links.

Functionally, nematode cuticles are composed largely of collagen-like proteins. The cuticle functions both as an exoskeleton and as a barrier to protect the worm from its environment. Mutations in dpy-2 affects the body shape. The polypeptide is Cuticle collagen dpy-2 (dpy-2) (Caenorhabditis elegans).